We begin with the raw amino-acid sequence, 165 residues long: U11/U12 small nuclear ribonucleoprotein 25 kDa protein (165 aa).

Positions 52-137 (MRLSVVKLDG…IRNNSQVTFM (86 aa)) constitute a Ubiquitin-like domain. Residues 145 to 165 (RGRHSKRKKHRLFRSLHKTSS) form a disordered region.

In terms of assembly, component of the U11/U12 snRNPs that are part of the U12-type spliceosome.

Its subcellular location is the nucleus. The polypeptide is U11/U12 small nuclear ribonucleoprotein 25 kDa protein (SNRNP25) (Arabidopsis thaliana (Mouse-ear cress)).